Reading from the N-terminus, the 166-residue chain is Glutamyl-tRNA(Gln) amidotransferase subunit C, mitochondrial (166 aa).

The N-terminal 44 residues, 1-44, are a transit peptide targeting the mitochondrion; the sequence is MIRGWTIFTLCKPSALVGSSHFNKQFNWAKSQLQFATKVPQQPY.

This sequence belongs to the GatC family. As to quaternary structure, subunit of the heterotrimeric GatCAB amidotransferase (AdT) complex, composed of A, B and C subunits.

The protein localises to the mitochondrion. It carries out the reaction L-glutamyl-tRNA(Gln) + L-glutamine + ATP + H2O = L-glutaminyl-tRNA(Gln) + L-glutamate + ADP + phosphate + H(+). Allows the formation of correctly charged Gln-tRNA(Gln) through the transamidation of misacylated Glu-tRNA(Gln) in the mitochondria. The reaction takes place in the presence of glutamine and ATP through an activated gamma-phospho-Glu-tRNA(Gln). The sequence is that of Glutamyl-tRNA(Gln) amidotransferase subunit C, mitochondrial from Anopheles darlingi (Mosquito).